We begin with the raw amino-acid sequence, 1848 residues long: WD repeat-containing protein 90 (1848 aa).

The segment at 1–222 (MAGVWQHPFV…ISPMPREMSF (222 aa)) is binds with microtubules. Disordered stretches follow at residues 257–278 (MVTA…RSVT) and 316–336 (SVSA…GVEQ). A compositionally biased stretch (basic and acidic residues) spans 320–335 (RAEEARDLEDRSRGVE). 10 WD repeats span residues 436–479 (GHTD…AMFK), 481–523 (HVHS…RSGE), 530–570 (AHTD…LRSC), 644–683 (SSGP…VFLE), 685–724 (EHEG…YNTL), 727–766 (SHTD…QLYD), 769–808 (AEEE…LQAE), 811–850 (QHRG…QHVL), 955–993 (VHKQ…TVRP), and 998–1035 (GHSE…DPEF). Disordered stretches follow at residues 1053 to 1133 (ALDP…VESD) and 1151 to 1178 (LTGS…PDSY). A compositionally biased stretch (acidic residues) spans 1102–1113 (SESDDGQEEEGN). 2 stretches are compositionally biased toward basic and acidic residues: residues 1114–1129 (RDEQ…RDNL) and 1164–1178 (GMVK…PDSY). WD repeat units follow at residues 1252-1297 (GHPE…CMKI), 1300-1341 (HHRT…LLAT), 1343-1382 (RLFQ…TDTQ), 1395-1433 (GTAA…CFLT), 1435-1473 (EADQ…ELRE), 1532-1571 (GHRN…LLLQ), 1574-1621 (VLNQ…MEMK), 1624-1663 (PHPC…TIRV), 1670-1714 (SPIT…DKCE), 1774-1813 (PLSH…KQDF), and 1815-1848 (AYDD…IQNS).

The protein belongs to the WD repeat WDR90/POC16 family.

Its subcellular location is the cytoplasm. The protein localises to the cytoskeleton. The protein resides in the microtubule organizing center. It localises to the centrosome. It is found in the centriole. Its subcellular location is the centriolar satellite. In terms of biological role, microtubule-binding protein that plays a crucial role in ensuring inner core protein localization within the centriole core, as well as in maintaining the microtubule wall integrity and the overall centriole roundness and stability. Required for efficient primary cilium formation. In Xenopus tropicalis (Western clawed frog), this protein is WD repeat-containing protein 90 (wdr90).